We begin with the raw amino-acid sequence, 204 residues long: MSTFSVFNFQFSIKQMTGKLIIFSAPSGSGKSTIINYLLTQNLNLAFSISATSRPPRGTEKHGVEYFFLTPEEFRCRIENNEFLEYEEVYKDRYYGTLKEQVEKQLEKGQNVVFDLDVVGGCNIKKYYGERALSIFVQPPSIEELRCRLTGRGTDEPEVIECRIAKAEYEMTFAPQFDRVIVNDDLEAAKAETLEVIKEFLNKE.

Positions 18 to 198 (GKLIIFSAPS…AKAETLEVIK (181 aa)) constitute a Guanylate kinase-like domain. Position 25 to 32 (25 to 32 (APSGSGKS)) interacts with ATP.

The protein belongs to the guanylate kinase family.

It is found in the cytoplasm. The enzyme catalyses GMP + ATP = GDP + ADP. In terms of biological role, essential for recycling GMP and indirectly, cGMP. The sequence is that of Guanylate kinase from Bacteroides thetaiotaomicron (strain ATCC 29148 / DSM 2079 / JCM 5827 / CCUG 10774 / NCTC 10582 / VPI-5482 / E50).